A 442-amino-acid chain; its full sequence is MLNSIHRSFHLTSRHQIVLRLCSPSASRTIMSSSPHSPIPKTHTASLDSLNDYEEQFPPLTGGSKTKKFYLGSTNPSTPCQSSQLQNWTSGKDALSLQRNLGCKNRRRRRASRFLHEESNGTTFEVGAGIGSPTSMVHFDSTNPSSSSKSSQSQNLKIRKVRNHRNSGFKSRDQSPQRIKDPPPFDICSSVLERNDTSIKDWILADETNRETVEVSNKHKVIRPGMVLLKDFLTPDIQVDIVKTCRELGVKPTGFYQPGYSVGSKLHLQMMCLGRNWDPQTKYRKNTDIDSKAPEIPVTFNVLVEKAIREAHALIDRESGTEDAERILPVMSPDICIVNFYSETGRLGLHQDRDESEESIARGLPIVSFSIGDSAEFLYGEKRDVEEAQGVILESGDVLIFGGESRMIFHGVKSIIPNSAPMSLLNESKLRTGRLNLTFRHF.

Positions 135–144 are enriched in polar residues; sequence SMVHFDSTNP. The segment at 135–185 is disordered; that stretch reads SMVHFDSTNPSSSSKSSQSQNLKIRKVRNHRNSGFKSRDQSPQRIKDPPPF. Residues 145–154 are compositionally biased toward low complexity; the sequence is SSSSKSSQSQ. The span at 157–167 shows a compositional bias: basic residues; sequence KIRKVRNHRNS. The span at 170–183 shows a compositional bias: basic and acidic residues; the sequence is KSRDQSPQRIKDPP. The Fe2OG dioxygenase domain maps to 332–442; that stretch reads SPDICIVNFY…GRLNLTFRHF (111 aa). 2-oxoglutarate is bound at residue 339-341; it reads NFY. Residues histidine 350, aspartate 352, and histidine 410 each coordinate Fe cation. 434–440 lines the 2-oxoglutarate pocket; it reads RLNLTFR.

The protein belongs to the alkB family. Fe(2+) serves as cofactor. In terms of tissue distribution, expressed at low levels in roots, seedlings and rosette leaves, but barely in cauline leaves, stems, siliques and flowers.

Its subcellular location is the nucleus. The protein resides in the cytoplasm. It carries out the reaction an N(6)-methyl-2'-deoxyadenosine in DNA + 2-oxoglutarate + O2 = a 2'-deoxyadenosine in DNA + formaldehyde + succinate + CO2. In terms of biological role, dioxygenase that catalyzes DNA N(6)-methyladenine (6 mA) demethylation to modulate gene expression and regulate seed germination. This is DNA N(6)-methyladenine demethylase ALKBH1D from Arabidopsis thaliana (Mouse-ear cress).